Consider the following 360-residue polypeptide: Phospho-N-acetylmuramoyl-pentapeptide-transferase (360 aa).

The next 10 membrane-spanning stretches (helical) occupy residues 26–46 (AILGLLTALVFSLWFGPKLIE), 74–94 (MGGLLILAAIFISVLLWGDLG), 97–117 (YVWVMLFVLGSFGLIGFIDDY), 134–154 (YILQSLAALLIAFFLYATAAN), 168–188 (VMPQLGAVFIVLAYFTIVGSS), 199–219 (GLAIMPTVMVAAAFALIAYLS), 236–256 (SGELVIVCTAIVGAGLGFLWF), 263–283 (VFMGDVGSLSLGAALGTIAVL), 288–308 (ILLVIMGGVFVMETLSVILQV), and 338–358 (VIVRFWIISIFLVLLGLATLK).

It belongs to the glycosyltransferase 4 family. MraY subfamily. Mg(2+) is required as a cofactor.

Its subcellular location is the cell inner membrane. The enzyme catalyses UDP-N-acetyl-alpha-D-muramoyl-L-alanyl-gamma-D-glutamyl-meso-2,6-diaminopimeloyl-D-alanyl-D-alanine + di-trans,octa-cis-undecaprenyl phosphate = di-trans,octa-cis-undecaprenyl diphospho-N-acetyl-alpha-D-muramoyl-L-alanyl-D-glutamyl-meso-2,6-diaminopimeloyl-D-alanyl-D-alanine + UMP. It participates in cell wall biogenesis; peptidoglycan biosynthesis. Its function is as follows. Catalyzes the initial step of the lipid cycle reactions in the biosynthesis of the cell wall peptidoglycan: transfers peptidoglycan precursor phospho-MurNAc-pentapeptide from UDP-MurNAc-pentapeptide onto the lipid carrier undecaprenyl phosphate, yielding undecaprenyl-pyrophosphoryl-MurNAc-pentapeptide, known as lipid I. This chain is Phospho-N-acetylmuramoyl-pentapeptide-transferase, found in Shewanella baltica (strain OS195).